A 93-amino-acid polypeptide reads, in one-letter code: Small ribosomal subunit protein uS19c (93 aa).

Belongs to the universal ribosomal protein uS19 family.

The protein localises to the plastid. The protein resides in the chloroplast. Its function is as follows. Protein S19 forms a complex with S13 that binds strongly to the 16S ribosomal RNA. This is Small ribosomal subunit protein uS19c from Ipomoea purpurea (Common morning glory).